The following is a 532-amino-acid chain: Fe-S cluster assembly factor HCF101, chloroplastic (532 aa).

Residues 1-61 constitute a chloroplast transit peptide; the sequence is MPLLHPQSLR…RVSQNLSVAK (61 aa). Ala62 is subject to N-acetylalanine. ATP is bound at residue 184–191; it reads CKGGVGKS.

The protein belongs to the Mrp/NBP35 ATP-binding proteins family. The cofactor is [4Fe-4S] cluster. As to expression, expressed in aerial tissues exposed to light. Very low expression in roots.

It is found in the plastid. The protein localises to the chloroplast stroma. Functionally, required for photosystem I (PSI) biosynthesis and assembly. May serve as a chloroplast scaffold protein that specifically assembles iron-sulfur (4Fe-4S) clusters and transfers them to the chloroplast PSI and ferredoxin-thioredoxin (FTR) complexes. Can assemble a 4Fe-4S cluster and transfer it to apoproteins in yeast cells. Probably not required for assembly or stability of plastidic 2Fe-2S clusters. The chain is Fe-S cluster assembly factor HCF101, chloroplastic (HCF101) from Arabidopsis thaliana (Mouse-ear cress).